Here is a 196-residue protein sequence, read N- to C-terminus: Peroxisome assembly protein 22 (196 aa).

The chain crosses the membrane as a helical span at residues 15–37; it reads LWIAALVAASIVTISYKVYSSYI.

Belongs to the peroxin-22 family.

The protein localises to the peroxisome membrane. In terms of biological role, involved in peroxisome biogenesis. This Debaryomyces hansenii (strain ATCC 36239 / CBS 767 / BCRC 21394 / JCM 1990 / NBRC 0083 / IGC 2968) (Yeast) protein is Peroxisome assembly protein 22 (PEX22).